An 85-amino-acid chain; its full sequence is U4-theraphotoxin-Hhn1a (85 aa).

The N-terminal stretch at Met1–Glu22 is a signal peptide. Positions Glu23–Arg48 are excised as a propeptide. 3 cysteine pairs are disulfide-bonded: Cys52–Cys66, Cys56–Cys77, and Cys71–Cys82.

Belongs to the neurotoxin 12 (Hwtx-2) family. 02 (Hwtx-2) subfamily. As to quaternary structure, monomer. In terms of tissue distribution, expressed by the venom gland.

It is found in the secreted. In terms of biological role, neurotoxin active on both insects and mammals. The chain is U4-theraphotoxin-Hhn1a from Cyriopagopus hainanus (Chinese bird spider).